The sequence spans 591 residues: MMRSHYCGQLNESLDGQEVTLCGWVHRRRDHGGVIFLDIRDREGMAQVVFDPDRAETFAAADRVRSEYVVQITGKVRKRPDGAVNANMASGAIEILGYQLNVLNEAETPPFPLNEYSDVGEETRLRYRFIDLRRPEMADKLRLRSRITSSIRRFLDENGFLDVETPILTRATPEGARDYLVPSRTHAGSFFALPQSPQLFKQLLMVAGFDRYYQIAKCFRDEDLRADRQPEFTQIDIETSFLDESEIMGLTESMIRKLFKEVLDLEFGEFPHMTFEEAMRRYGSDKPDLRNPLELVDVADQLKDVDFKVFAGPANDPKCRVTALRLPGGASMPRSKIDEYTKFVGIYGAKGLAYIKVNERAKGVEGLQSPIVKNIPEANLNNILDRVGAVDGDIVFFGADKFKVVSEALGALRIRLGHDFELLTCEWAPMWVVDFPMFEENEDGSFTALHHPFTAPKCTPEELEANPATALSRAYDMVLNGTELGGGSIRIHRKEMQQAVFRLLGIEAEEQEEKFGFLLDALKFGAPPHGGLAFGLDRLVMLMTGAQSIREVIAFPKTQSAACVMTQAPGLVDAKALRELHIRLREQTKVE.

E174 provides a ligand contact to L-aspartate. Residues 198-201 (QLFK) are aspartate. Residue R220 coordinates L-aspartate. ATP contacts are provided by residues 220–222 (RDE) and Q229. L-aspartate is bound at residue H450. Residue E483 coordinates ATP. R490 contacts L-aspartate. 535–538 (GLDR) contributes to the ATP binding site.

This sequence belongs to the class-II aminoacyl-tRNA synthetase family. Type 1 subfamily. Homodimer.

It is found in the cytoplasm. The catalysed reaction is tRNA(Asx) + L-aspartate + ATP = L-aspartyl-tRNA(Asx) + AMP + diphosphate. Its function is as follows. Aspartyl-tRNA synthetase with relaxed tRNA specificity since it is able to aspartylate not only its cognate tRNA(Asp) but also tRNA(Asn). Reaction proceeds in two steps: L-aspartate is first activated by ATP to form Asp-AMP and then transferred to the acceptor end of tRNA(Asp/Asn). The polypeptide is Aspartate--tRNA(Asp/Asn) ligase (Pseudomonas putida (strain GB-1)).